Reading from the N-terminus, the 411-residue chain is Short chain dehydrogenase ausT (411 aa).

The NADP(+) site is built by Asp105, Gln137, Tyr249, and Arg253. Tyr249 (proton donor) is an active-site residue. Tyr263 functions as the Proton donor in the catalytic mechanism.

This sequence belongs to the short-chain dehydrogenases/reductases (SDR) family.

It functions in the pathway secondary metabolite biosynthesis; terpenoid biosynthesis. Short chain dehydrogenase; part of the gene cluster that mediates the biosynthesis of calidodehydroaustin, a fungal meroterpenoid. The first step of the pathway is the synthesis of 3,5-dimethylorsellinic acid by the polyketide synthase ausA. 3,5-dimethylorsellinic acid is then prenylated by the polyprenyl transferase ausN. Further epoxidation by the FAD-dependent monooxygenase ausM and cyclization by the probable terpene cyclase ausL lead to the formation of protoaustinoid A. Protoaustinoid A is then oxidized to spiro-lactone preaustinoid A3 by the combined action of the FAD-binding monooxygenases ausB and ausC, and the dioxygenase ausE. Acid-catalyzed keto-rearrangement and ring contraction of the tetraketide portion of preaustinoid A3 by ausJ lead to the formation of preaustinoid A4. The aldo-keto reductase ausK, with the help of ausH, is involved in the next step by transforming preaustinoid A4 into isoaustinone which is in turn hydroxylated by the P450 monooxygenase ausI to form austinolide. The cytochrome P450 monooxygenase ausG modifies austinolide to austinol. Austinol is further acetylated to austin by the O-acetyltransferase ausP, which spontaneously changes to dehydroaustin. The cytochrome P450 monooxygenase ausR then converts dehydroaustin is into 7-dehydrodehydroaustin. The hydroxylation catalyzed by ausR permits the O-acetyltransferase ausQ to add an additional acetyl group to the molecule, leading to the formation of acetoxydehydroaustin. The short chain dehydrogenase ausT catalyzes the reduction of the double bond present between carbon atoms 1 and 2 to convert 7-dehydrodehydroaustin into 1,2-dihydro-7-hydroxydehydroaustin. AusQ catalyzes not only an acetylation reaction but also the addition of the PKS ausV diketide product to 1,2-dihydro-7-hydroxydehydroaustin, forming precalidodehydroaustin. Finally, the iron/alpha-ketoglutarate-dependent dioxygenase converts precalidodehydroaustin into calidodehydroaustin. The protein is Short chain dehydrogenase ausT of Aspergillus calidoustus.